Consider the following 1133-residue polypeptide: Early transcription factor large subunit homolog (1133 aa).

Residues 52-352 (KGGRAFFPCD…PNGQPLQRQQ (301 aa)) enclose the Helicase ATP-binding domain. 99 to 106 (WQTGTGKS) contributes to the ATP binding site. The DEAH box signature appears at 281 to 284 (DEIH). Positions 524–724 (MMKDILSIIR…EGDKALRKHA (201 aa)) constitute a Helicase C-terminal domain.

The protein belongs to the DEAD box helicase family. DEAH subfamily.

It is found in the virion. The enzyme catalyses ATP + H2O = ADP + phosphate + H(+). Its function is as follows. Putative initation factor. This Ornithodoros (relapsing fever ticks) protein is Early transcription factor large subunit homolog.